A 310-amino-acid chain; its full sequence is Formyltetrahydrofolate deformylase (310 aa).

A disordered region spans residues 1–30 (MGKGSMTAHATPNEPDYPPPPGGPPPPADI). A compositionally biased stretch (pro residues) spans 15-28 (PDYPPPPGGPPPPA). One can recognise an ACT domain in the interval 32 to 108 (RLLLRCHDRP…VADKFGIDYR (77 aa)). The active site involves D255.

It belongs to the PurU family.

The enzyme catalyses (6R)-10-formyltetrahydrofolate + H2O = (6S)-5,6,7,8-tetrahydrofolate + formate + H(+). It participates in purine metabolism; IMP biosynthesis via de novo pathway; formate from 10-formyl-5,6,7,8-tetrahydrofolate: step 1/1. Functionally, catalyzes the hydrolysis of 10-formyltetrahydrofolate (formyl-FH4) to formate and tetrahydrofolate (FH4). This chain is Formyltetrahydrofolate deformylase, found in Mycobacterium bovis (strain ATCC BAA-935 / AF2122/97).